Here is a 120-residue protein sequence, read N- to C-terminus: Transcription elongation factor SPT4 (120 aa).

The interval 1 to 39 (MSASVPADLRNLRACLLCSLVKSVESFQKEGCENCEDVL) is interaction with spt-5. The C4-type zinc finger occupies 15-35 (CLLCSLVKSVESFQKEGCENC).

Belongs to the SPT4 family. Interacts with spt-5 to form DSIF. DSIF interacts with RNA polymerase II and with the positive transcription elongation factor b complex (P-TEFb complex), which is composed of cdk-9 and cyclin-T (cit-1.1 or cit-1.2).

It localises to the nucleus. May function as a component of the DRB sensitivity-inducing factor complex (DSIF complex), which regulates transcription elongation by RNA polymerase II. DSIF may enhance transcriptional pausing at sites proximal to the promoter, which may in turn facilitate the assembly of an elongation competent RNA polymerase II complex. The protein is Transcription elongation factor SPT4 (spt-4) of Caenorhabditis elegans.